A 340-amino-acid polypeptide reads, in one-letter code: Methionyl-tRNA formyltransferase (340 aa).

Residue 110 to 113 (SLLP) coordinates (6S)-5,6,7,8-tetrahydrofolate.

This sequence belongs to the Fmt family.

The catalysed reaction is L-methionyl-tRNA(fMet) + (6R)-10-formyltetrahydrofolate = N-formyl-L-methionyl-tRNA(fMet) + (6S)-5,6,7,8-tetrahydrofolate + H(+). In terms of biological role, attaches a formyl group to the free amino group of methionyl-tRNA(fMet). The formyl group appears to play a dual role in the initiator identity of N-formylmethionyl-tRNA by promoting its recognition by IF2 and preventing the misappropriation of this tRNA by the elongation apparatus. The sequence is that of Methionyl-tRNA formyltransferase from Synechococcus sp. (strain WH7803).